The sequence spans 350 residues: tRNA uridine(34) hydroxylase (350 aa).

Residues 146 to 240 enclose the Rhodanese domain; sequence DDPDALFIDM…YARKAREQGL (95 aa). Cys200 functions as the Cysteine persulfide intermediate in the catalytic mechanism.

Belongs to the TrhO family.

The catalysed reaction is uridine(34) in tRNA + AH2 + O2 = 5-hydroxyuridine(34) in tRNA + A + H2O. Functionally, catalyzes oxygen-dependent 5-hydroxyuridine (ho5U) modification at position 34 in tRNAs, the first step in 5-carboxymethoxyuridine (cmo5U) biosynthesis. May be part of an alternate pathway, which is able to bypass cmo5U biogenesis in a subset of tRNAs under aerobic conditions. The protein is tRNA uridine(34) hydroxylase of Escherichia coli O9:H4 (strain HS).